The following is a 326-amino-acid chain: Glyoxylate/hydroxypyruvate reductase B (326 aa).

Catalysis depends on residues Arg237 and Glu266. The active-site Proton donor is the His285.

This sequence belongs to the D-isomer specific 2-hydroxyacid dehydrogenase family. GhrB subfamily. In terms of assembly, homodimer.

The protein resides in the cytoplasm. It catalyses the reaction glycolate + NADP(+) = glyoxylate + NADPH + H(+). It carries out the reaction (R)-glycerate + NAD(+) = 3-hydroxypyruvate + NADH + H(+). The enzyme catalyses (R)-glycerate + NADP(+) = 3-hydroxypyruvate + NADPH + H(+). Catalyzes the NADPH-dependent reduction of glyoxylate and hydroxypyruvate into glycolate and glycerate, respectively. This Yersinia enterocolitica serotype O:8 / biotype 1B (strain NCTC 13174 / 8081) protein is Glyoxylate/hydroxypyruvate reductase B.